The sequence spans 248 residues: 2-acetamido-2-deoxy-D-galactose-binding seed lectin 2 (248 aa).

Residue Asn119 is glycosylated (N-linked (GlcNAc...) asparagine; partial). Mn(2+) is bound by residues Glu128 and Asp130. Residues Asp130, Tyr132, Asn134, and Asp138 each coordinate Ca(2+). Asp138 and His144 together coordinate Mn(2+).

The protein belongs to the leguminous lectin family.

The polypeptide is 2-acetamido-2-deoxy-D-galactose-binding seed lectin 2 (Cytisus scoparius (Scotch broom)).